A 728-amino-acid polypeptide reads, in one-letter code: 1,4-alpha-glucan branching enzyme GlgB (728 aa).

D405 functions as the Nucleophile in the catalytic mechanism. Catalysis depends on E458, which acts as the Proton donor.

This sequence belongs to the glycosyl hydrolase 13 family. GlgB subfamily. In terms of assembly, monomer.

The enzyme catalyses Transfers a segment of a (1-&gt;4)-alpha-D-glucan chain to a primary hydroxy group in a similar glucan chain.. It participates in glycan biosynthesis; glycogen biosynthesis. Functionally, catalyzes the formation of the alpha-1,6-glucosidic linkages in glycogen by scission of a 1,4-alpha-linked oligosaccharide from growing alpha-1,4-glucan chains and the subsequent attachment of the oligosaccharide to the alpha-1,6 position. The protein is 1,4-alpha-glucan branching enzyme GlgB of Shigella boydii serotype 4 (strain Sb227).